The following is a 149-amino-acid chain: Nucleoside diphosphate kinase (149 aa).

Residues K9, F57, R85, T91, R102, and N112 each contribute to the ATP site. H115 functions as the Pros-phosphohistidine intermediate in the catalytic mechanism.

Belongs to the NDK family. Homotetramer. Requires Mg(2+) as cofactor.

Its subcellular location is the cytoplasm. It catalyses the reaction a 2'-deoxyribonucleoside 5'-diphosphate + ATP = a 2'-deoxyribonucleoside 5'-triphosphate + ADP. The catalysed reaction is a ribonucleoside 5'-diphosphate + ATP = a ribonucleoside 5'-triphosphate + ADP. In terms of biological role, major role in the synthesis of nucleoside triphosphates other than ATP. The ATP gamma phosphate is transferred to the NDP beta phosphate via a ping-pong mechanism, using a phosphorylated active-site intermediate. This is Nucleoside diphosphate kinase from Herpetosiphon aurantiacus (strain ATCC 23779 / DSM 785 / 114-95).